Reading from the N-terminus, the 678-residue chain is Nucleolar protein 9 (678 aa).

Residues 1-15 are compositionally biased toward basic residues; the sequence is MPRDKQKRGRRAEAK. The disordered stretch occupies residues 1–24; the sequence is MPRDKQKRGRRAEAKRKRDDVITD. 3 Pumilio repeats span residues 108–143, 291–334, and 382–419; these read EANG…RLFS, GLDN…SLLR, and KILV…SAMD. The tract at residues 477 to 496 is disordered; the sequence is QRSNQESDGTTSSSNTSSPE. Pumilio repeat units follow at residues 524–562 and 563–600; these read AVTT…QITS and RFSG…RFAE.

The protein localises to the nucleus. It is found in the nucleolus. Its function is as follows. RNA-binding nucleolar protein required for pre-rRNA processing. Involved in production of 18S rRNA and assembly of small ribosomal subunit. The sequence is that of Nucleolar protein 9 (NOP9) from Paracoccidioides brasiliensis (strain Pb18).